A 61-amino-acid chain; its full sequence is Metallothionein-1F (61 aa).

At M1 the chain carries N-acetylmethionine. Positions M1–C29 are beta. A divalent metal cation is bound by residues C5, C7, C13, C15, C19, C21, C24, C26, C29, C33, C34, C36, C37, C41, C44, C48, C50, and C57. Positions K30 to D61 are alpha. The residue at position 58 (S58) is a Phosphoserine. A divalent metal cation is bound by residues C59 and C60.

The protein belongs to the metallothionein superfamily. Type 1 family. In terms of assembly, monomer.

Its function is as follows. Metallothioneins have a high content of cysteine residues that bind various heavy metals; these proteins are transcriptionally regulated by both heavy metals and glucocorticoids. This chain is Metallothionein-1F (MT1F), found in Homo sapiens (Human).